A 908-amino-acid chain; its full sequence is MEEGGRDKAPVQPQQSPAAAPGGTDEKPSGKERRDAGDKDKEQELSEEDKQLQDELEMLVERLGEKDTSLYRPALEELRRQIRSSTTSMTSVPKPLKFLRPHYGKLKEIYENMAPGENKRFAADIISVLAMTMSGERECLKYRLVGSQEELASWGHEYVRHLAGEVAKEWQELDDAEKVQREPLLTLVKEIVPYNMAHNAEHEACDLLMEIEQVDMLEKDIDENAYAKVCLYLTSCVNYVPEPENSALLRCALGVFRKFSRFPEALRLALMLNDMELVEDIFTSCKDVVVQKQMAFMLGRHGVFLELSEDVEEYEDLTEIMSNVQLNSNFLALARELDIMEPKVPDDIYKTHLENNRFGGSGSQVDSARMNLASSFVNGFVNAAFGQDKLLTDDGNKWLYKNKDHGMLSAAASLGMILLWDVDGGLTQIDKYLYSSEDYIKSGALLACGIVNSGVRNECDPALALLSDYVLHNSNTMRLGSIFGLGLAYAGSNREDVLTLLLPVMGDSKSSMEVAGVTALACGMIAVGSCNGDVTSTILQTIMEKSETELKDTYARWLPLGLGLNHLGKGEAIEAILAALEVVSEPFRSFANTLVDVCAYAGSGNVLKVQQLLHICSEHFDSKEKEEDKDKKEKKDKDKKEAPADMGAHQGVAVLGIALIAMGEEIGAEMALRTFGHLLRYGEPTLRRAVPLALALISVSNPRLNILDTLSKFSHDADPEVSYNSIFAMGMVGSGTNNARLAAMLRQLAQYHAKDPNNLFMVRLAQGLTHLGKGTLTLCPYHSDRQLMSQVAVAGLLTVLVSFLDVRNIILGKSHYVLYGLVAAMQPRMLVTFDEELRPLPVSVRVGQAVDVVGQAGKPKTITGFQTHTTPVLLAHGERAELATEEFLPVTPILEGFVILRKNPNYDL.

M1 is subject to N-acetylmethionine. Positions 1–52 (MEEGGRDKAPVQPQQSPAAAPGGTDEKPSGKERRDAGDKDKEQELSEEDKQL) are disordered. Residues 10–21 (PVQPQQSPAAAP) show a composition bias toward low complexity. Residue S16 is modified to Phosphoserine. Phosphothreonine is present on T24. Positions 24–52 (TDEKPSGKERRDAGDKDKEQELSEEDKQL) are enriched in basic and acidic residues. Phosphoserine is present on residues S29 and S147. Phosphotyrosine is present on Y194. Phosphoserine occurs at positions 361 and 363. PC repeat units lie at residues 409–442 (SAAASLGMILLWDVDGGLTQIDKYLYSSEDYIKS), 443–479 (GALLACGIVNSGVRNECDPALALLSDYVLHNSNTMRL), 480–514 (GSIFGLGLAYAGSNREDVLTLLLPVMGDSKSSMEV), 517–551 (VTALACGMIAVGSCNGDVTSTILQTIMEKSETELK), and 560–589 (LGLGLNHLGKGEAIEAILAALEVVSEPFRS). At K551 the chain carries N6-acetyllysine. The segment covering 623–643 (KEKEEDKDKKEKKDKDKKEAP) has biased composition (basic and acidic residues). The disordered stretch occupies residues 623–645 (KEKEEDKDKKEKKDKDKKEAPAD). PC repeat units follow at residues 692 to 723 (LALALISVSNPRLNILDTLSKFSHDADPEVSY) and 742 to 757 (AAMLRQLAQYHAKDPN). The required for interaction with UBLCP1 stretch occupies residues 708–903 (DTLSKFSHDA…LEGFVILRKN (196 aa)).

This sequence belongs to the proteasome subunit S2 family. In terms of assembly, component of the 19S proteasome regulatory particle complex. The 26S proteasome consists of a 20S core particle (CP) and two 19S regulatory subunits (RP). The regulatory particle is made of a lid composed of 9 subunits, a base containing 6 ATPases and few additional components including PSMD2. Interacts with RPGRIP1L. Interacts with CRY1 in a KDM8-dependent manner. Interacts (via C-terminus) with phosphatase UBLCP1 (via ubiquitin-like domain); the interaction recruits UBLCP1 to the 19S regulatory particle where it dephosphorylates 19S subunit PSMC2/RPT1 which impairs PSMC2 ATPase activity and disrupts 26S proteasome assembly. In terms of tissue distribution, found in skeletal muscle, liver, heart, brain, kidney, pancreas, lung and placenta.

Its function is as follows. Component of the 26S proteasome, a multiprotein complex involved in the ATP-dependent degradation of ubiquitinated proteins. This complex plays a key role in the maintenance of protein homeostasis by removing misfolded or damaged proteins, which could impair cellular functions, and by removing proteins whose functions are no longer required. Therefore, the proteasome participates in numerous cellular processes, including cell cycle progression, apoptosis, or DNA damage repair. Functionally, binds to the intracellular domain of tumor necrosis factor type 1 receptor. The binding domain of TRAP1 and TRAP2 resides outside the death domain of TNFR1. The protein is 26S proteasome non-ATPase regulatory subunit 2 (PSMD2) of Homo sapiens (Human).